We begin with the raw amino-acid sequence, 351 residues long: 1-acylglycerol-3-phosphate O-acyltransferase ABHD5 (351 aa).

Residues 79–184 enclose the AB hydrolase-1 domain; that stretch reads PLVLLHGFGG…LILVEPWGFP (106 aa). The residue at position 124 (serine 124) is a Phosphoserine. An HXXXXD motif motif is present at residues 329 to 334; that stretch reads HYVYAD.

It belongs to the peptidase S33 family. ABHD4/ABHD5 subfamily. Interacts with ADRP and PLIN. Interacts with PNPLA2. Interacts with PLIN5; promotes interaction with PNPLA2.

Its subcellular location is the cytoplasm. It localises to the lipid droplet. The catalysed reaction is a 1-acyl-sn-glycero-3-phosphate + an acyl-CoA = a 1,2-diacyl-sn-glycero-3-phosphate + CoA. It catalyses the reaction 1-(9Z-octadecenoyl)-sn-glycero-3-phosphate + (9Z)-octadecenoyl-CoA = 1,2-di-(9Z-octadecenoyl)-sn-glycero-3-phosphate + CoA. It carries out the reaction 1-(9Z-octadecenoyl)-sn-glycero-3-phosphate + hexadecanoyl-CoA = 1-(9Z)-octadecenoyl-2-hexadecanoyl-sn-glycero-3-phosphate + CoA. The enzyme catalyses 1-(9Z-octadecenoyl)-sn-glycero-3-phosphate + octadecanoyl-CoA = 1-(9Z-octadecenoyl)-2-octadecanoyl-sn-glycero-3-phosphate + CoA. The catalysed reaction is 1-(9Z-octadecenoyl)-sn-glycero-3-phosphate + (5Z,8Z,11Z,14Z)-eicosatetraenoyl-CoA = 1-(9Z)-octadecenoyl-2-(5Z,8Z,11Z,14Z)-eicosatetraenoyl-sn-glycero-3-phosphate + CoA. It catalyses the reaction eicosanoyl-CoA + 1-(9Z-octadecenoyl)-sn-glycero-3-phosphate = 1-(9Z)-octadecenoyl-2-eicosanoyl-sn-glycero-3-phosphate + CoA. It carries out the reaction 1-hexadecanoyl-sn-glycero-3-phosphate + (9Z)-octadecenoyl-CoA = 1-hexadecanoyl-2-(9Z-octadecenoyl)-sn-glycero-3-phosphate + CoA. The enzyme catalyses 1-octadecanoyl-sn-glycero-3-phosphate + (9Z)-octadecenoyl-CoA = 1-octadecanoyl-2-(9Z-octadecenoyl)-sn-glycero-3-phosphate + CoA. The catalysed reaction is 1-(5Z,8Z,11Z,14Z-eicosatetraenoyl)-sn-glycero-3-phosphate + (9Z)-octadecenoyl-CoA = 1-(5Z,8Z,11Z,14Z)-eicosatetraenoyl-2-(9Z)-octadecenoyl-sn-glycero-3-phosphate + CoA. Its activity is regulated as follows. Acyltransferase activity is inhibited by detergents such as Triton X-100 and 3-[(3-cholamidopropyl)dimethylammonio]-1-propanesulfonate (CHAPS). Acyltransferase activity is inhibited by the presence of magnesium and calcium. Coenzyme A-dependent lysophosphatidic acid acyltransferase that catalyzes the transfer of an acyl group on a lysophosphatidic acid. Functions preferentially with 1-oleoyl-lysophosphatidic acid followed by 1-palmitoyl-lysophosphatidic acid, 1-stearoyl-lysophosphatidic acid and 1-arachidonoyl-lysophosphatidic acid as lipid acceptor. Functions preferentially with arachidonoyl-CoA followed by oleoyl-CoA as acyl group donors. Functions in phosphatidic acid biosynthesis. May regulate the cellular storage of triacylglycerol through activation of the phospholipase PNPLA2. Involved in keratinocyte differentiation. Regulates lipid droplet fusion. The protein is 1-acylglycerol-3-phosphate O-acyltransferase ABHD5 of Rattus norvegicus (Rat).